The following is a 170-amino-acid chain: Bifunctional protein PyrR (170 aa).

A PRPP-binding motif is present at residues 90 to 102 (LVLVDDVLMSGRT).

Belongs to the purine/pyrimidine phosphoribosyltransferase family. PyrR subfamily.

The enzyme catalyses UMP + diphosphate = 5-phospho-alpha-D-ribose 1-diphosphate + uracil. Its function is as follows. Regulates the transcription of the pyrimidine nucleotide (pyr) operon in response to exogenous pyrimidines. Also displays a weak uracil phosphoribosyltransferase activity which is not physiologically significant. The protein is Bifunctional protein PyrR of Pseudomonas aeruginosa (strain LESB58).